Consider the following 643-residue polypeptide: MIKVTLKDGSVKEFEAGLSVYEIAKSISEGLARNACCGVVNGKVCDLREEVKEDVSLSICTFDSQEGKDAVRHSISHVLAYAVKRLFPETKLAIGPSIATGFYYDFDKDVAFSAQDLEKLEAEMKKIIKENPSIEKFELPRNEALELMKDEPYKVELINDLGEDEIISFYKLGEFTDLCAGPHVMSLKPIKAIKLIRSAGAYWKGDEKNKMLTRIYGTAFLKKSELDEYLDAVEEAKKRDHNKLGRELKLFTTDENVGQGLPLLMPKGAKIVQTLQRWVEDEEERRGYVLTKTPLMAKSDLYKISGHWDHYKDGMFVLGDEEKDEEVFALRPMTCPFQYTIYNAEQHSYRDLPIRYGETSTLFRNESSGEMHGLIRVRQFTLADGHLIVTPEQLEEEFKGVLELIQYLMKTLGIDEDISYRFSKWDPNNTEKYINDPEAWNKTQDTMRTILDHLKINYVEADDEAAFYGPKLDLQCRNVHGKEDTLFTVQIDFALAERFDMSYIDKNGEKKRPYIIHRSSIGCYERTLAMLIEKYAGAFPTWLSPVQVKVLPISDKYNDYAESVVKSLRNKGVRIEADYRAEKIGYKIREARLERTPYILVVGEKEAANNEVSVRSRKNDDEGAIKLDAFTERLLNEIATKER.

One can recognise a TGS domain in the interval 1 to 61; it reads MIKVTLKDGS…KEDVSLSICT (61 aa). Residues 240-540 are catalytic; sequence DHNKLGRELK…LIEKYAGAFP (301 aa). 3 residues coordinate Zn(2+): Cys335, His386, and His517.

This sequence belongs to the class-II aminoacyl-tRNA synthetase family. As to quaternary structure, homodimer. The cofactor is Zn(2+).

It localises to the cytoplasm. The catalysed reaction is tRNA(Thr) + L-threonine + ATP = L-threonyl-tRNA(Thr) + AMP + diphosphate + H(+). Catalyzes the attachment of threonine to tRNA(Thr) in a two-step reaction: L-threonine is first activated by ATP to form Thr-AMP and then transferred to the acceptor end of tRNA(Thr). Also edits incorrectly charged L-seryl-tRNA(Thr). The chain is Threonine--tRNA ligase from Clostridium botulinum (strain Eklund 17B / Type B).